We begin with the raw amino-acid sequence, 338 residues long: Fructose-1,6-bisphosphatase class 1 (338 aa).

Mg(2+)-binding residues include Glu92, Asp115, Leu117, and Asp118. Substrate contacts are provided by residues 118–121, Asn211, Tyr244, 262–264, and Lys274; these read DGSS and YLY. Glu280 provides a ligand contact to Mg(2+).

The protein belongs to the FBPase class 1 family. In terms of assembly, homotetramer. It depends on Mg(2+) as a cofactor.

Its subcellular location is the cytoplasm. The enzyme catalyses beta-D-fructose 1,6-bisphosphate + H2O = beta-D-fructose 6-phosphate + phosphate. It participates in carbohydrate biosynthesis; gluconeogenesis. This is Fructose-1,6-bisphosphatase class 1 from Vibrio vulnificus (strain YJ016).